The primary structure comprises 201 residues: IMP cyclohydrolase (201 aa).

It belongs to the archaeal IMP cyclohydrolase family.

It carries out the reaction IMP + H2O = 5-formamido-1-(5-phospho-D-ribosyl)imidazole-4-carboxamide. The protein operates within purine metabolism; IMP biosynthesis via de novo pathway; IMP from 5-formamido-1-(5-phospho-D-ribosyl)imidazole-4-carboxamide: step 1/1. Its function is as follows. Catalyzes the cyclization of 5-formylamidoimidazole-4-carboxamide ribonucleotide to IMP. This Methanococcus maripaludis (strain C6 / ATCC BAA-1332) protein is IMP cyclohydrolase.